An 88-amino-acid chain; its full sequence is UPF0250 protein SO_1163 (88 aa).

The protein belongs to the UPF0250 family.

The polypeptide is UPF0250 protein SO_1163 (Shewanella oneidensis (strain ATCC 700550 / JCM 31522 / CIP 106686 / LMG 19005 / NCIMB 14063 / MR-1)).